We begin with the raw amino-acid sequence, 237 residues long: Pre-protein VI (237 aa).

Positions 1–32 (MDDPFSTLAPRRGTQPLLSNWATIGISELHGG) are excised as a propeptide. Residues 33-57 (ALGWGSWWSNLSRLGSSFGSNLKNL) are amphipathic alpha-helix essential for membrane lytic activity. The segment at 35 to 56 (GWGSWWSNLSRLGSSFGSNLKN) is involved in endosomal membrane lysis. The tract at residues 51-77 (GSNLKNLGLKAWNSSTGQALRQHLKDT) is interaction with hexon protein. A Nuclear export signal motif is present at residues 70–79 (LRQHLKDTNL). Thr146 is subject to Phosphothreonine; by host. The Nuclear export signal signature appears at 218–229 (GTLDSIMGLGLQ). The interval 220 to 226 (LDSIMGL) is interaction with hexon protein. Positions 227-237 (GLQPIKRRRCF) are binds to importin alpha/beta, involved in hexon nuclear import. The short motif at 232 to 235 (KRRR) is the Nuclear localization signal element.

The protein belongs to the adenoviridae protein VI family. Interacts with hexon protein; this interaction allows nuclear import of hexon trimers and possibly pre-capsid assembly. Interacts (via C-terminal NLS) with importin alpha/beta. As to quaternary structure, interacts (via PPxY motif) with host NEDD4 ubiquitine ligase; this interaction might play a role in virus intracellular transport during entry. Part of a complex composed of the core-capsid bridging protein, the endosome lysis protein VI and the hexon-linking protein VIII; these interactions bridge the virus core to the capsid. Interacts with peripentonal hexons; this interaction stabilizes the capsid by gluing two peripentonal hexons together and joining them with an adjacent group-of-nine hexon. In terms of assembly, heterodimer with the viral protease; disulfide-linked. Interacts with the viral protease. In terms of processing, ubiquitinated by Nedd4 following partial capsid disassembly; which might play a role in intracellular virus movement during entry. Contains the major nuclear import and export signals. Proteolytically removed during virion maturation. The processing of the C-terminus turns the precursor into a mature viral structural protein and abrogates its ability to promote hexon import and act as a potential chaperone protein.

It localises to the host nucleus. The protein resides in the host cytoplasm. It is found in the virion. Functionally, during virus assembly, promotes hexon trimers nuclear import through nuclear pore complexes via an importin alpha/beta-dependent mechanism. By analogy to herpesviruses capsid assembly, might act as a chaperone to promote the formation of the icosahedral capsid. Its function is as follows. Structural component of the virion that provides increased stability to the particle shell through its interaction with the core-capsid bridging protein and the hexon-linking protein VIII. Fibers shedding during virus entry into host cell allows the endosome lysis protein to be exposed as a membrane-lytic peptide. Exhibits pH-independent membrane fragmentation activity and probably mediates viral rapid escape from host endosome via organellar membrane lysis. It is not clear if it then remains partially associated with the capsid and involved in the intracellular microtubule-dependent transport of capsid to the nucleus, or if it is lost during endosomal penetration. In terms of biological role, cofactor that activates the viral protease. Binds to viral protease in a 1:1 ratio. This is Pre-protein VI from Mus musculus (Mouse).